The sequence spans 466 residues: Probable periplasmic serine protease do/HhoA-like (466 aa).

The signal sequence occupies residues 1–29; the sequence is MKKTRFVLNSIALGLSVLSTSFVAHVAQA. Residues His120, Asp150, and Ser226 each act as charge relay system in the active site. PDZ domains are found at residues 270–361 and 367–458; these read ILEF…LRDG and KMKL…LRGD.

This sequence belongs to the peptidase S1C family.

It localises to the periplasm. The chain is Probable periplasmic serine protease do/HhoA-like from Haemophilus influenzae (strain ATCC 51907 / DSM 11121 / KW20 / Rd).